The primary structure comprises 327 residues: Trypsin-like protease try-5 (327 aa).

An N-terminal signal peptide occupies residues 1 to 21 (MRPRIIVFLFQVLVVIKGTKL). The 285-residue stretch at 43–327 (AAGNTGNPTH…KFIVNFINQA (285 aa)) folds into the Peptidase S1 domain. A disulfide bridge links C73 with C89. Active-site charge relay system residues include H88 and D173. N207 carries an N-linked (GlcNAc...) asparagine glycan. Cystine bridges form between C242–C256 and C266–C296. Residue S270 is the Charge relay system of the active site.

This sequence belongs to the peptidase S1 family. In terms of tissue distribution, specifically expressed in the male gonad including the seminal vesicle, the valve region and the vas deferens.

The protein localises to the secreted. The protein resides in the cytoplasmic vesicle. It localises to the secretory vesicle lumen. With respect to regulation, in the male gonad, probably maintained inactive by swm-1. Serine protease which, in males, acts as a promoting signal during mating to activate sperm. The sequence is that of Trypsin-like protease try-5 from Caenorhabditis elegans.